Here is a 292-residue protein sequence, read N- to C-terminus: Ribosomal RNA small subunit methyltransferase A (292 aa).

Positions 46, 48, 73, 94, 118, and 136 each coordinate S-adenosyl-L-methionine.

The protein belongs to the class I-like SAM-binding methyltransferase superfamily. rRNA adenine N(6)-methyltransferase family. RsmA subfamily.

Its subcellular location is the cytoplasm. It carries out the reaction adenosine(1518)/adenosine(1519) in 16S rRNA + 4 S-adenosyl-L-methionine = N(6)-dimethyladenosine(1518)/N(6)-dimethyladenosine(1519) in 16S rRNA + 4 S-adenosyl-L-homocysteine + 4 H(+). Functionally, specifically dimethylates two adjacent adenosines (A1518 and A1519) in the loop of a conserved hairpin near the 3'-end of 16S rRNA in the 30S particle. May play a critical role in biogenesis of 30S subunits. This is Ribosomal RNA small subunit methyltransferase A from Deinococcus radiodurans (strain ATCC 13939 / DSM 20539 / JCM 16871 / CCUG 27074 / LMG 4051 / NBRC 15346 / NCIMB 9279 / VKM B-1422 / R1).